The sequence spans 342 residues: P21 prophage-derived major head protein (342 aa).

This sequence belongs to the lambda phage major capsid protein family.

The sequence is that of P21 prophage-derived major head protein from Escherichia coli O6:H1 (strain CFT073 / ATCC 700928 / UPEC).